The chain runs to 609 residues: MKWVTFISLLFLFSSAYSRGVFRRDAHKSEVAHRFKDLGEEKFKALVLIAFAQYLQQCPFEDHVKLVNEVTEFAKTCVADESAENCDKSLHTLFGDKLCTVATLRETYGEMADCCAKQEPERNECFLQHKDDNPNLPRLVRPEVDVMCTAFHDNEETFLKKYLYEIARRHPYFYAPELLFFAVRYKAAFTECCQAADKAACLLPKLDELRDEGKASSAKQRLKCASLQKFGERAFKAWAVARLSQRFPKAEFAEVSKLVTDLTKVHTECCHGDLLECADDRADLAKYICENQDSISSKLKECCEKPLLEKSHCLAEVENDEMPADLPSLAADFVESKDVCKNYAEAKDVFLGMFLYEYARRHPDYSVVLLLRLAKTYETTLEKCCAAADPHECYAKVFDEFKPLVEEPQNLIKQNCELFEQLGEYKFQNELLVRYTKKVPQVSTPTLVEVSRNLGKVGSKCCKHPEPKRMPCAEDYLSVVLNQLCVLHEKTPVSERVTKCCTESLVNRRPCFSALEVDETYVPKEFNADTFTFHADICTLSEKERQIKKQTALVELVKHKPKATKEQLKTVMEDFAAFVEKCCKADDKETCFAEEGKKLVAASQAALGL.

Residues methionine 1 to serine 18 form the signal peptide. The propeptide occupies arginine 19 to arginine 24. 3 consecutive Albumin domains span residues arginine 19–arginine 210, aspartate 211–proline 403, and leucine 404–alanine 601. Histidine 27 provides a ligand contact to Cu cation. Serine 29 carries the phosphoserine modification. Glutamate 30 and aspartate 37 together coordinate Ca(2+). Cysteine 77 and cysteine 86 are disulfide-bonded. Serine 82 and serine 89 each carry phosphoserine. Residue histidine 91 coordinates Zn(2+). 6 disulfides stabilise this stretch: cysteine 99/cysteine 115, cysteine 114/cysteine 125, cysteine 148/cysteine 193, cysteine 192/cysteine 201, cysteine 224/cysteine 270, and cysteine 269/cysteine 277. Threonine 107 carries the phosphothreonine modification. Lysine 229 is modified (N6-succinyllysine). Lysine 264 contacts (4Z,15Z)-bilirubin IXalpha. Glutamate 268 is a Ca(2+) binding site. Residues histidine 271 and aspartate 273 each coordinate Zn(2+). Ca(2+)-binding residues include aspartate 273, glutamate 276, aspartate 279, and aspartate 283. 8 disulfide bridges follow: cysteine 289–cysteine 303, cysteine 302–cysteine 313, cysteine 340–cysteine 385, cysteine 384–cysteine 393, cysteine 416–cysteine 462, cysteine 461–cysteine 472, cysteine 485–cysteine 501, and cysteine 500–cysteine 511. A Phosphoserine modification is found at serine 297. Residue serine 443 is modified to Phosphoserine. Phosphothreonine occurs at positions 444 and 446. Lysine 460 bears the N6-succinyllysine mark. Residue serine 513 is modified to Phosphoserine. 2 disulfide bridges follow: cysteine 538/cysteine 583 and cysteine 582/cysteine 591. Position 543 is an N6-succinyllysine (lysine 543). Lysine 558 is subject to N6-methyllysine. Position 570 is a phosphothreonine (threonine 570). The residue at position 588 (lysine 588) is an N6-succinyllysine.

This sequence belongs to the ALB/AFP/VDB family. In terms of assembly, interacts with FCGRT; this interaction regulates ALB homeostasis. Interacts with TASOR. In plasma, occurs in a covalently-linked complex with chromophore-bound alpha-1-microglobulin; this interaction does not prevent fatty acid binding to ALB. In terms of processing, phosphorylated by FAM20C in the extracellular medium. Plasma.

It localises to the secreted. Binds water, Ca(2+), Na(+), K(+), fatty acids, hormones, bilirubin and drugs. Its main function is the regulation of the colloidal osmotic pressure of blood. Major zinc transporter in plasma, typically binds about 80% of all plasma zinc. Major calcium and magnesium transporter in plasma, binds approximately 45% of circulating calcium and magnesium in plasma. Potentially has more than two calcium-binding sites and might additionally bind calcium in a non-specific manner. The shared binding site between zinc and calcium at residue Asp-273 suggests a crosstalk between zinc and calcium transport in the blood. The rank order of affinity is zinc &gt; calcium &gt; magnesium. Binds to the bacterial siderophore enterobactin and inhibits enterobactin-mediated iron uptake of E.coli from ferric transferrin, and may thereby limit the utilization of iron and growth of enteric bacteria such as E.coli. Does not prevent iron uptake by the bacterial siderophore aerobactin. This chain is Albumin (ALB), found in Pongo abelii (Sumatran orangutan).